The chain runs to 66 residues: MPKMKTKSSAKKRFKVTATGKVMAGQAGKRHGMIKRHKKFIRDARGTTTLSAPDAKIVKGFMPYDR.

It belongs to the bacterial ribosomal protein bL35 family.

The polypeptide is Large ribosomal subunit protein bL35 (Ruegeria sp. (strain TM1040) (Silicibacter sp.)).